A 278-amino-acid chain; its full sequence is MAEQRWTGQLDLTVFNNGQSSKARNIFFEKALKVLRPIYLEQSPVPTFYIVNVGGGYLDGDRYRVNVNLEDNAQVTLTSQGATKIYKTPNDHVEQYQTFNLSNQSYMEFVADPIIAYENAKFFQHNTFNLKEDSAMFYTDILTPGYSSNGQDFTYNYMHLINEIYIDNQLVVFDNMMLSPDKSRLDGIGYMENYTHLGSAYFIHPDVNQSFIDDIYAAVADFQKQYDCRIGISQLPTHGLAVRILTKRTQIIEEILTRVQSYINQTIYHRQINFLRKY.

The protein belongs to the UreD family. As to quaternary structure, ureD, UreF and UreG form a complex that acts as a GTP-hydrolysis-dependent molecular chaperone, activating the urease apoprotein by helping to assemble the nickel containing metallocenter of UreC. The UreE protein probably delivers the nickel.

The protein localises to the cytoplasm. Functionally, required for maturation of urease via the functional incorporation of the urease nickel metallocenter. The protein is Urease accessory protein UreD of Staphylococcus epidermidis (strain ATCC 12228 / FDA PCI 1200).